A 509-amino-acid chain; its full sequence is Maturase K (509 aa).

Belongs to the intron maturase 2 family. MatK subfamily.

The protein localises to the plastid. Its subcellular location is the chloroplast. Its function is as follows. Usually encoded in the trnK tRNA gene intron. Probably assists in splicing its own and other chloroplast group II introns. This chain is Maturase K, found in Clematis ligusticifolia (Western white clematis).